A 177-amino-acid polypeptide reads, in one-letter code: Mitochondrial inner membrane protease subunit 2 (177 aa).

A helical membrane pass occupies residues 19-37 (FFVAVPVAVTFLDRVACVA). Catalysis depends on residues Ser-43 and Lys-91.

The protein belongs to the peptidase S26 family. IMP2 subfamily. Heterodimer of 2 subunits, IMMPL1 and IMMPL2.

It localises to the mitochondrion inner membrane. Catalyzes the removal of transit peptides required for the targeting of proteins from the mitochondrial matrix, across the inner membrane, into the inter-membrane space. Known to process the nuclear encoded protein DIABLO. The polypeptide is Mitochondrial inner membrane protease subunit 2 (IMMP2L) (Bos taurus (Bovine)).